Consider the following 370-residue polypeptide: 2-aminoethylphosphonate--pyruvate transaminase (370 aa).

Residue Lys194 is modified to N6-(pyridoxal phosphate)lysine.

It belongs to the class-V pyridoxal-phosphate-dependent aminotransferase family. PhnW subfamily. As to quaternary structure, homodimer. The cofactor is pyridoxal 5'-phosphate.

It carries out the reaction (2-aminoethyl)phosphonate + pyruvate = phosphonoacetaldehyde + L-alanine. Functionally, involved in phosphonate degradation. The polypeptide is 2-aminoethylphosphonate--pyruvate transaminase (Paraburkholderia phymatum (strain DSM 17167 / CIP 108236 / LMG 21445 / STM815) (Burkholderia phymatum)).